The sequence spans 188 residues: Elongation factor P (188 aa).

Belongs to the elongation factor P family.

The protein localises to the cytoplasm. It functions in the pathway protein biosynthesis; polypeptide chain elongation. Functionally, involved in peptide bond synthesis. Stimulates efficient translation and peptide-bond synthesis on native or reconstituted 70S ribosomes in vitro. Probably functions indirectly by altering the affinity of the ribosome for aminoacyl-tRNA, thus increasing their reactivity as acceptors for peptidyl transferase. The protein is Elongation factor P of Flavobacterium johnsoniae (strain ATCC 17061 / DSM 2064 / JCM 8514 / BCRC 14874 / CCUG 350202 / NBRC 14942 / NCIMB 11054 / UW101) (Cytophaga johnsonae).